A 332-amino-acid chain; its full sequence is Large ribosomal subunit protein mL44 (332 aa).

A mitochondrion-targeting transit peptide spans Met-1 to Gly-30. Residues Asp-86–Leu-228 form the RNase III domain. The DRBM domain occupies Asn-236–Gly-306.

Belongs to the ribonuclease III family. Mitochondrion-specific ribosomal protein mL44 subfamily. In terms of assembly, component of the mitochondrial ribosome large subunit (39S) which comprises a 16S rRNA and about 50 distinct proteins.

Its subcellular location is the mitochondrion. In terms of biological role, component of the 39S subunit of mitochondrial ribosome. May have a function in the assembly/stability of nascent mitochondrial polypeptides exiting the ribosome. The protein is Large ribosomal subunit protein mL44 (MRPL44) of Pongo abelii (Sumatran orangutan).